A 127-amino-acid polypeptide reads, in one-letter code: MSKPAAPRRVGEKEALAVATTVRGSPYKLNLVAGLIRGKKAGDALNILTFSKKAMAVDVRKVLASAIANAENNHNLDVDALVVKEASVGKSIVMKRFATRGRGKSTRIIKPFARLRVVVREQQEEAE.

Belongs to the universal ribosomal protein uL22 family. Part of the 50S ribosomal subunit.

Functionally, this protein binds specifically to 23S rRNA; its binding is stimulated by other ribosomal proteins, e.g. L4, L17, and L20. It is important during the early stages of 50S assembly. It makes multiple contacts with different domains of the 23S rRNA in the assembled 50S subunit and ribosome. The globular domain of the protein is located near the polypeptide exit tunnel on the outside of the subunit, while an extended beta-hairpin is found that lines the wall of the exit tunnel in the center of the 70S ribosome. This chain is Large ribosomal subunit protein uL22, found in Rhizorhabdus wittichii (strain DSM 6014 / CCUG 31198 / JCM 15750 / NBRC 105917 / EY 4224 / RW1) (Sphingomonas wittichii).